The following is a 347-amino-acid chain: NADH-ubiquinone oxidoreductase chain 2 (347 aa).

11 consecutive transmembrane segments (helical) span residues Met1 to Ala21, His25 to Thr45, Ala55 to Leu75, Thr96 to Pro116, Thr123 to Tyr143, Ile145 to Gly165, Ile178 to Pro198, Ile200 to Asn220, Leu237 to Leu257, Gly274 to Met294, and Phe324 to Phe344.

This sequence belongs to the complex I subunit 2 family. In terms of assembly, core subunit of respiratory chain NADH dehydrogenase (Complex I) which is composed of 45 different subunits. Interacts with TMEM242.

Its subcellular location is the mitochondrion inner membrane. It carries out the reaction a ubiquinone + NADH + 5 H(+)(in) = a ubiquinol + NAD(+) + 4 H(+)(out). Core subunit of the mitochondrial membrane respiratory chain NADH dehydrogenase (Complex I) which catalyzes electron transfer from NADH through the respiratory chain, using ubiquinone as an electron acceptor. Essential for the catalytic activity and assembly of complex I. This Hylobates lar (Lar gibbon) protein is NADH-ubiquinone oxidoreductase chain 2.